Consider the following 83-residue polypeptide: Cytochrome b559 subunit alpha (83 aa).

The helical transmembrane segment at 21–35 (VIHSITIPSLFIAGW) threads the bilayer. His-23 lines the heme pocket.

Belongs to the PsbE/PsbF family. In terms of assembly, heterodimer of an alpha subunit and a beta subunit. PSII is composed of 1 copy each of membrane proteins PsbA, PsbB, PsbC, PsbD, PsbE, PsbF, PsbH, PsbI, PsbJ, PsbK, PsbL, PsbM, PsbT, PsbX, PsbY, PsbZ, Psb30/Ycf12, at least 3 peripheral proteins of the oxygen-evolving complex and a large number of cofactors. It forms dimeric complexes. It depends on heme b as a cofactor.

The protein localises to the plastid. It is found in the chloroplast thylakoid membrane. Its function is as follows. This b-type cytochrome is tightly associated with the reaction center of photosystem II (PSII). PSII is a light-driven water:plastoquinone oxidoreductase that uses light energy to abstract electrons from H(2)O, generating O(2) and a proton gradient subsequently used for ATP formation. It consists of a core antenna complex that captures photons, and an electron transfer chain that converts photonic excitation into a charge separation. This is Cytochrome b559 subunit alpha from Chaetosphaeridium globosum (Charophycean green alga).